An 82-amino-acid chain; its full sequence is Putative antitoxin Saci_0468 (82 aa).

This sequence belongs to the UPF0330 family.

Its function is as follows. Possibly the antitoxin component of a type II toxin-antitoxin (TA) system. This Sulfolobus acidocaldarius (strain ATCC 33909 / DSM 639 / JCM 8929 / NBRC 15157 / NCIMB 11770) protein is Putative antitoxin Saci_0468.